The following is a 264-amino-acid chain: MSIVSLLGIEVLNNPAKFTDPYEFEITFECLEPLKEDLEWKLTYVGSSRSLDHDQELDSILVGPVPVGINKFLFQADPPSPELIPASELVSVTVILLSCSYADREFVRVGYYVNNEYDSEELRENPPAKVQVEHVVRNILAEKPRVTRFNIVWDNEDGNADEYPPEQQVDEEEEEEEEEEEEEDDEEEEEEKDVEGEEGEEGEDAEEAAEVEENGSKEASKEEDIEEDIEEDIEEDIEEDIEIEDEEEAKNADQGETPIDKVQS.

Positions 152-264 are disordered; sequence VWDNEDGNAD…GETPIDKVQS (113 aa). 2 stretches are compositionally biased toward acidic residues: residues 154–213 and 223–248; these read DNED…EVEE and EDIE…DEEE. Coiled-coil stretches lie at residues 165-198 and 231-251; these read PEQQ…EGEE and EDIE…EAKN.

It belongs to the ASF1 family. Interacts with histone H3 and histone H4.

Its subcellular location is the nucleus. In terms of biological role, histone chaperone that facilitates histone deposition and histone exchange and removal during nucleosome assembly and disassembly. In Debaryomyces hansenii (strain ATCC 36239 / CBS 767 / BCRC 21394 / JCM 1990 / NBRC 0083 / IGC 2968) (Yeast), this protein is Histone chaperone ASF1 (ASF1).